A 155-amino-acid polypeptide reads, in one-letter code: MADLSALKEIATTAEPAAPVHVKKVDAQGRSYATGKRKDAVARVWVKAGSGKITVNGKPFSAYFARPVLQMILQQPIVAAARDGQFDVDATVAGGGLSGQAGAVRHGIAKALTYFEPGLRSVLKRGGFLTRDSRVVERKKYGRAKARRSFQFSKR.

It belongs to the universal ribosomal protein uS9 family.

This chain is Small ribosomal subunit protein uS9, found in Sinorhizobium fredii (strain NBRC 101917 / NGR234).